The sequence spans 505 residues: ATP synthase subunit alpha (505 aa).

170-177 (GDRQTGKT) is a binding site for ATP.

Belongs to the ATPase alpha/beta chains family. As to quaternary structure, F-type ATPases have 2 components, CF(1) - the catalytic core - and CF(0) - the membrane proton channel. CF(1) has five subunits: alpha(3), beta(3), gamma(1), delta(1), epsilon(1). CF(0) has four main subunits: a(1), b(1), b'(1) and c(9-12).

The protein localises to the cellular thylakoid membrane. The catalysed reaction is ATP + H2O + 4 H(+)(in) = ADP + phosphate + 5 H(+)(out). Its function is as follows. Produces ATP from ADP in the presence of a proton gradient across the membrane. The alpha chain is a regulatory subunit. The protein is ATP synthase subunit alpha of Trichodesmium erythraeum (strain IMS101).